Consider the following 427-residue polypeptide: Homogentisate 1,2-dioxygenase (427 aa).

The Proton acceptor role is filled by H285. Fe cation is bound by residues H328 and E334. Residues Y343 and H364 each coordinate homogentisate. H364 serves as a coordination point for Fe cation.

The protein belongs to the homogentisate dioxygenase family. Hexamer; dimer of trimers. Requires Fe cation as cofactor.

It catalyses the reaction homogentisate + O2 = 4-maleylacetoacetate + H(+). Its pathway is amino-acid degradation; L-phenylalanine degradation; acetoacetate and fumarate from L-phenylalanine: step 4/6. In terms of biological role, involved in the catabolism of homogentisate (2,5-dihydroxyphenylacetate or 2,5-OH-PhAc), a central intermediate in the degradation of phenylalanine and tyrosine. Catalyzes the oxidative ring cleavage of the aromatic ring of homogentisate to yield maleylacetoacetate. The protein is Homogentisate 1,2-dioxygenase of Caulobacter sp. (strain K31).